A 611-amino-acid chain; its full sequence is Replication protein E1 (611 aa).

Positions 74–76 (KRK) match the Nuclear localization signal motif. Ser-80, Ser-84, and Ser-90 each carry phosphoserine; by host. The Nuclear export signal motif lies at 89–98 (LSPGLAGIRI). Basic and acidic residues predominate over residues 112 to 128 (FDAGGRDAVRTPRDHEV). The interval 112–154 (FDAGGRDAVRTPRDHEVNSSPEPRSQVQSGSSSRSWEGHLESI) is disordered. Over residues 135-146 (RSQVQSGSSSRS) the composition is skewed to low complexity. Positions 146–313 (SWEGHLESIN…TNVAYNTGEA (168 aa)) are DNA-binding region. One can recognise an SF3 helicase domain in the interval 412–562 (IEPINFVNAL…CPASDTGEPL (151 aa)). Residue 438–445 (GPPNSGKS) participates in ATP binding. Lys-519 participates in a covalent cross-link: Glycyl lysine isopeptide (Lys-Gly) (interchain with G-Cter in SUMO).

This sequence belongs to the papillomaviridae E1 protein family. Can form hexamers. Interacts with E2 protein; this interaction increases E1 DNA binding specificity. Interacts with host DNA polymerase subunit POLA2. Interacts with host single stranded DNA-binding protein RPA1. Interacts with host TOP1; this interaction stimulates the enzymatic activity of TOP1. In terms of processing, phosphorylated. Sumoylated.

The protein localises to the host nucleus. It catalyses the reaction Couples ATP hydrolysis with the unwinding of duplex DNA by translocating in the 3'-5' direction.. The catalysed reaction is ATP + H2O = ADP + phosphate + H(+). In terms of biological role, ATP-dependent DNA 3'-5' helicase required for initiation of viral DNA replication. It forms a complex with the viral E2 protein. The E1-E2 complex binds to the replication origin which contains binding sites for both proteins. During the initial step, a dimer of E1 interacts with a dimer of protein E2 leading to a complex that binds the viral origin of replication with high specificity. Then, a second dimer of E1 displaces the E2 dimer in an ATP-dependent manner to form the E1 tetramer. Following this, two E1 monomers are added to each half of the site, which results in the formation of two E1 trimers on the viral ori. Subsequently, two hexamers will be created. The double hexamer acts as a bi-directional helicase machinery and unwinds the viral DNA and then recruits the host DNA polymerase to start replication. This is Replication protein E1 from Cervus elaphus (Red deer).